The primary structure comprises 351 residues: UDP-glucose 4-epimerase 5 (351 aa).

NAD(+) is bound by residues 13–15 (GYI), 34–38 (DNLDN), 64–65 (DL), F86, and K90. 130–132 (SAT) contributes to the substrate binding site. Y154 functions as the Proton acceptor in the catalytic mechanism. NAD(+) contacts are provided by K158 and Y182. Substrate-binding positions include 182 to 184 (YFN), 203 to 205 (NNL), 221 to 223 (TVF), R236, and 298 to 301 (RPGD).

Belongs to the NAD(P)-dependent epimerase/dehydratase family. Forms homodimers and heterodimers. Requires NAD(+) as cofactor. In terms of tissue distribution, widely expressed.

The enzyme catalyses UDP-alpha-D-glucose = UDP-alpha-D-galactose. It functions in the pathway carbohydrate metabolism; galactose metabolism. Enhanced activity by NaCl. Inhibited by UDP. In terms of biological role, catalyzes the interconversion between UDP-glucose and UDP-galactose. The polypeptide is UDP-glucose 4-epimerase 5 (Arabidopsis thaliana (Mouse-ear cress)).